A 70-amino-acid chain; its full sequence is UPF0426 protein ssl0294 (70 aa).

This sequence belongs to the UPF0426 family.

This is UPF0426 protein ssl0294 from Synechocystis sp. (strain ATCC 27184 / PCC 6803 / Kazusa).